The primary structure comprises 114 residues: Tyrosine-protein phosphatase 11 (114 aa).

Positions 1-114 (WRMIWEHNTR…EAKHTGPTIV (114 aa)) constitute a Tyrosine-protein phosphatase domain. Asp81 lines the substrate pocket.

Belongs to the protein-tyrosine phosphatase family.

The enzyme catalyses O-phospho-L-tyrosyl-[protein] + H2O = L-tyrosyl-[protein] + phosphate. The polypeptide is Tyrosine-protein phosphatase 11 (STY-11) (Styela plicata (Wrinkled sea squirt)).